The chain runs to 135 residues: Membrane-anchored ubiquitin-fold protein 4 (135 aa).

The segment at 1–20 is disordered; that stretch reads MAEKEEGKVAAEGGAEAEAD. A Ubiquitin-like domain is found at 23–92; sequence VEVKFRLFDG…NDKNIAQCRA (70 aa). Cysteine methyl ester is present on Cys132. The S-geranylgeranyl cysteine moiety is linked to residue Cys132. The propeptide at 133 to 135 is removed in mature form; the sequence is TIL.

The protein resides in the cell membrane. Its function is as follows. May serve as docking site to facilitate the association of other proteins to the plasma membrane. The sequence is that of Membrane-anchored ubiquitin-fold protein 4 (MUB4) from Oryza sativa subsp. japonica (Rice).